A 698-amino-acid chain; its full sequence is Protein SST2 (698 aa).

The tract at residues 10-203 (ELSSKNFSRT…GAKPNVWSPT (194 aa)) is fungal-DR. Position 252 is a phosphoserine (serine 252). The region spanning 273–358 (SNAGIRLFEN…SRSSFFTLSK (86 aa)) is the DEP domain. Serine 408 carries the phosphoserine modification. The 270-residue stretch at 420–689 (KLDYVLTDPG…TQSDVYKDAS (270 aa)) folds into the RGS domain. Serine 539 carries the post-translational modification Phosphoserine; by MAPK. The tract at residues 545–586 (FPTNLYDPSPASAESAASSISSTEADTLGEPPEVSLKPSKNL) is disordered. The segment covering 551–570 (DPSPASAESAASSISSTEAD) has biased composition (low complexity). Phosphoserine is present on serine 587.

Post-translationally, phosphorylated by FUS3 and KSS1.

Its function is as follows. Desensitization to alpha-factor pheromone. Is involved in regulating the signaling pathway for responding to mating pheromone. The chain is Protein SST2 (SST2) from Saccharomyces cerevisiae (strain ATCC 204508 / S288c) (Baker's yeast).